A 136-amino-acid polypeptide reads, in one-letter code: Probable S-adenosyl-L-methionine-binding protein PH1056 (136 aa).

In terms of domain architecture, TsaA-like spans 8–126 (IVPVGYIRKE…FPERYDCPKE (119 aa)). S-adenosyl-L-methionine is bound by residues 48–49 (HK), arginine 78, and 106–109 (EDGT).

It belongs to the tRNA methyltransferase O family.

This chain is Probable S-adenosyl-L-methionine-binding protein PH1056, found in Pyrococcus horikoshii (strain ATCC 700860 / DSM 12428 / JCM 9974 / NBRC 100139 / OT-3).